The following is a 549-amino-acid chain: O-fucosyltransferase 29 (549 aa).

Residues 43 to 63 (TVMWTWVCGFMLFSLGVISLF) form a helical; Signal-anchor for type II membrane protein membrane-spanning segment. N-linked (GlcNAc...) asparagine glycosylation occurs at N152. 292-294 (HLR) provides a ligand contact to substrate. N-linked (GlcNAc...) asparagine glycosylation is found at N359 and N527. Residues 506–549 (PFSYDKTSTDDEEEDMSEENHNSTSPGHVHLSSADNERDEVFPD) are disordered. Residues 540–549 (DNERDEVFPD) show a composition bias toward basic and acidic residues.

Belongs to the glycosyltransferase GT106 family.

It is found in the membrane. It participates in glycan metabolism. This is O-fucosyltransferase 29 from Arabidopsis thaliana (Mouse-ear cress).